The chain runs to 493 residues: Amphoterin-induced protein 1 (493 aa).

A signal peptide spans 1 to 27; it reads MHPHRDPRGLWLLLPSLSLLLFEVARA. Residues 28–61 enclose the LRRNT domain; that stretch reads GRAVVSCPAACLCASNILSCSKQQLPNVPHSLPS. At 28 to 372 the chain is on the extracellular side; sequence GRAVVSCPAA…LHGHHDTLNT (345 aa). 2 disulfide bridges follow: Cys-34/Cys-40 and Cys-38/Cys-47. 6 LRR repeats span residues 62 to 83, 87 to 108, 111 to 132, 135 to 156, 159 to 179, and 186 to 206; these read YTAL…WTPT, QLHS…AFSP, NLRY…LFSD, VLEV…AFDD, QLQK…ELVK, and KLTL…PDLQ. Asn-72 is a glycosylation site (N-linked (GlcNAc...) asparagine). The 52-residue stretch at 221 to 272 folds into the LRRCT domain; the sequence is NPLNCDCELYQLFSHWQYRQLSSVMDFQEDLYCMNSKKLHNVFNLSFLNCGE. Intrachain disulfides connect Cys-225/Cys-253, Cys-227/Cys-270, and Cys-290/Cys-341. Residues Asn-264, Asn-315, Asn-349, and Asn-360 are each glycosylated (N-linked (GlcNAc...) asparagine). Residues 269 to 353 form the Ig-like C2-type domain; the sequence is NCGEYKERAW…MGETFNETLS (85 aa). A helical transmembrane segment spans residues 373 to 393; sequence AYTTLVGCILSVVLVLIYLYL. Topologically, residues 394–493 are cytoplasmic; that stretch reads TPCRCWCRGV…SVFSDTPIVV (100 aa). The segment at 405–493 is disordered; sequence KPSSHQGDSL…SVFSDTPIVV (89 aa). Residues 408–424 are compositionally biased toward polar residues; the sequence is SHQGDSLSSSMLSTTPN. Residues 431-442 are compositionally biased toward basic and acidic residues; the sequence is GDKDDGFDRRVA. Phosphoserine occurs at positions 477 and 481.

It belongs to the immunoglobulin superfamily. AMIGO family. Homodimer, and heterodimer with AMIGO2 and AMIGO3. Interacts with KCNB1.

It localises to the cell membrane. Its subcellular location is the perikaryon. It is found in the cell projection. The protein resides in the dendrite. The protein localises to the axon. Functionally, promotes growth and fasciculation of neurites from cultured hippocampal neurons. May be involved in fasciculation as well as myelination of developing neural axons. May have a role in regeneration as well as neural plasticity in the adult nervous system. May mediate homophilic as well as heterophilic cell-cell interaction and contribute to signal transduction through its intracellular domain. Assembled with KCNB1 modulates the gating characteristics of the delayed rectifier voltage-dependent potassium channel KCNB1. This chain is Amphoterin-induced protein 1, found in Homo sapiens (Human).